The primary structure comprises 223 residues: Ribose-5-phosphate isomerase A (223 aa).

Substrate contacts are provided by residues Thr-26–Thr-29, Asp-82–Asp-85, and Lys-95–Gly-98. The active-site Proton acceptor is the Glu-104. Lys-122 is a binding site for substrate.

This sequence belongs to the ribose 5-phosphate isomerase family. Homodimer.

The catalysed reaction is aldehydo-D-ribose 5-phosphate = D-ribulose 5-phosphate. It participates in carbohydrate degradation; pentose phosphate pathway; D-ribose 5-phosphate from D-ribulose 5-phosphate (non-oxidative stage): step 1/1. Catalyzes the reversible conversion of ribose-5-phosphate to ribulose 5-phosphate. The sequence is that of Ribose-5-phosphate isomerase A from Streptococcus agalactiae serotype V (strain ATCC BAA-611 / 2603 V/R).